A 233-amino-acid chain; its full sequence is Transcriptional regulatory protein WalR (233 aa).

The Response regulatory domain maps to 4–117 (KVVVVDDEKP…ELIARVKANL (114 aa)). At aspartate 53 the chain carries 4-aspartylphosphate. Residues 132 to 231 (TNEITIKDIV…RRGVGYFLQQ (100 aa)) constitute a DNA-binding region (ompR/PhoB-type).

Post-translationally, phosphorylated by WalK.

Its subcellular location is the cytoplasm. Member of the two-component regulatory system WalK/WalR. This chain is Transcriptional regulatory protein WalR (walR), found in Staphylococcus haemolyticus (strain JCSC1435).